A 457-amino-acid polypeptide reads, in one-letter code: Amidophosphoribosyltransferase (457 aa).

The Nucleophile role is filled by C2. The 222-residue stretch at 2–223 (CGVVGIYHPD…PGKAAIIKDG (222 aa)) folds into the Glutamine amidotransferase type-2 domain. C239 provides a ligand contact to [4Fe-4S] cluster. 3 residues coordinate Mg(2+): S286, D348, and D349. C385, C438, and C441 together coordinate [4Fe-4S] cluster.

It in the C-terminal section; belongs to the purine/pyrimidine phosphoribosyltransferase family. It depends on Mg(2+) as a cofactor. The cofactor is [4Fe-4S] cluster.

It catalyses the reaction 5-phospho-beta-D-ribosylamine + L-glutamate + diphosphate = 5-phospho-alpha-D-ribose 1-diphosphate + L-glutamine + H2O. It participates in purine metabolism; IMP biosynthesis via de novo pathway; N(1)-(5-phospho-D-ribosyl)glycinamide from 5-phospho-alpha-D-ribose 1-diphosphate: step 1/2. Its function is as follows. Catalyzes the formation of phosphoribosylamine from phosphoribosylpyrophosphate (PRPP) and glutamine. This is Amidophosphoribosyltransferase from Archaeoglobus fulgidus (strain ATCC 49558 / DSM 4304 / JCM 9628 / NBRC 100126 / VC-16).